The following is an 802-amino-acid chain: Receptor-type tyrosine-protein phosphatase alpha (802 aa).

Residues 1–19 form the signal peptide; it reads MDSWFILVLLGSGLICVSA. Topologically, residues 20–151 are extracellular; that stretch reads NNATTVAPSV…DSKDRRDETP (132 aa). N-linked (GlcNAc...) asparagine glycans are attached at residues N21 and N36. The disordered stretch occupies residues 39–59; the sequence is TAEPVKEEAKTSNPTSSLTSL. N68, N80, N86, N104, and N124 each carry an N-linked (GlcNAc...) asparagine glycan. Composition is skewed to polar residues over residues 79–115 and 123–141; these read VNSS…QFTD and GNSS…SGNS. A disordered region spans residues 79–146; it reads VNSSDSDNGT…PSGNSDSKDR (68 aa). Residues 152 to 174 form a helical membrane-spanning segment; that stretch reads IIAVMVALSSLLVIVFIIIVLYM. The Cytoplasmic segment spans residues 175 to 802; it reads LRFKKYKQAG…DAFSDYANFK (628 aa). S211 and S213 each carry phosphoserine. Tyrosine-protein phosphatase domains lie at 241 to 501 and 533 to 791; these read FREE…LLEH and LEEE…VQEY. Substrate is bound by residues D410, 442-448, and Q486; that span reads CSAGVGR. C442 functions as the Phosphocysteine intermediate in the catalytic mechanism. C732 (phosphocysteine intermediate) is an active-site residue. Residue Y798 is modified to Phosphotyrosine.

It belongs to the protein-tyrosine phosphatase family. Receptor class 4 subfamily. In terms of assembly, part of a complex comprised of PTPRA, BCAR1, BCAR3 (via SH2 domain), and SRC. Within the complex, interacts (when phosphorylated on Tyr-798) with BCAR3 (via SH2 domain). Interacts with GRB2. Post-translationally, integrin binding to extracellular matrix induces phosphorylation at Tyr-798 which induces PTPRA localization and recruitment of BCAR3, BCAR1 and CRK to focal adhesions.

Its subcellular location is the cell membrane. It is found in the cell junction. The protein resides in the focal adhesion. The enzyme catalyses O-phospho-L-tyrosyl-[protein] + H2O = L-tyrosyl-[protein] + phosphate. Its function is as follows. Tyrosine protein phosphatase which is involved in integrin-mediated focal adhesion formation. Following integrin engagement, specifically recruits BCAR3, BCAR1 and CRK to focal adhesions thereby promoting SRC-mediated phosphorylation of BRAC1 and the subsequent activation of PAK and small GTPase RAC1 and CDC42. The polypeptide is Receptor-type tyrosine-protein phosphatase alpha (PTPRA) (Homo sapiens (Human)).